Here is a 546-residue protein sequence, read N- to C-terminus: MCSLGLFPPPPPRGQVTLYEHNNELVTGSSYESPPPDFRGQWINLPVLQLTKDPLKTPGRLDHGTRTAFIHHREQVWKRCINIWRDVGLFGVLNEIANSEEEVFEWVKTASGWALALCRWASSLHGSLFPHLSLRSEDLIAEFAQVTNWSSCCLRVFAWHPHTNKFAVALLDDSVRVYNASSTIVPSLKHRLQRNVASLAWKPLSASVLAVACQSCILIWTLDPTSLSTRPSSGCAQVLSHPGHTPVTSLAWAPSGGRLLSASPVDAAIRVWDVSTETCVPLPWFRGGGVTNLLWSPDGSKILATTPSAVFRVWEAQMWTCERWPTLSGRCQTGCWSPDGSRLLFTVLGEPLIYSLSFPERCGEGKGCVGGAKSATIVADLSETTIQTPDGEERLGGEAHSMVWDPSGERLAVLMKGKPRVQDGKPVILLFRTRNSPVFELLPCGIIQGEPGAQPQLITFHPSFNKGALLSVGWSTGRIAHIPLYFVNAQFPRFSPVLGRAQEPPAGGGGSIHDLPLFTETSPTSAPWDPLPGPPPVLPHSPHSHL.

Position 2 is an N-acetylcysteine (Cys-2). Phosphoserine is present on Ser-33. WD repeat units lie at residues 142 to 180, 183 to 222, 234 to 274, 280 to 316, 324 to 380, 386 to 433, and 442 to 482; these read EFAQ…VYNA, TIVP…IWTL, GCAQ…VWDV, VPLP…VWEA, WPTL…IVAD, IQTP…LFRT, and LPCG…IAHI. Ser-495, Ser-511, Ser-522, and Ser-525 each carry phosphoserine. The tract at residues 500-546 is disordered; that stretch reads RAQEPPAGGGGSIHDLPLFTETSPTSAPWDPLPGPPPVLPHSPHSHL. Over residues 529-539 the composition is skewed to pro residues; it reads DPLPGPPPVLP. Ser-541 carries the post-translational modification Phosphoserine. The short motif at 544–546 is the Microbody targeting signal element; it reads SHL.

In terms of assembly, interacts with NDC1, the interaction is required for nuclear pore localization. Interacts with the inactive form aurora kinase AURKA. Interacts with PGRMC2. As to expression, widely expressed. Particularly abundant in cerebellum, corpus callosum, adrenal gland, pituitary gland, gastrointestinal structures and fetal lung.

It is found in the nucleus. It localises to the nuclear pore complex. The protein localises to the cytoplasm. The protein resides in the cytoskeleton. Its subcellular location is the spindle pole. It is found in the nucleus envelope. Functionally, plays a role in the normal development of the peripheral and central nervous system. Required for the correct localization of aurora kinase AURKA and the microtubule minus end-binding protein NUMA1 as well as a subset of AURKA targets which ensures proper spindle formation and timely chromosome alignment. The protein is Aladin (AAAS) of Homo sapiens (Human).